We begin with the raw amino-acid sequence, 435 residues long: 5-methylthioadenosine/S-adenosylhomocysteine deaminase (435 aa).

Zn(2+)-binding residues include histidine 65 and histidine 67. Substrate contacts are provided by glutamate 94, arginine 150, and histidine 189. Residue histidine 216 coordinates Zn(2+). The substrate site is built by glutamate 219 and aspartate 304. Aspartate 304 contacts Zn(2+).

This sequence belongs to the metallo-dependent hydrolases superfamily. MTA/SAH deaminase family. Requires Zn(2+) as cofactor.

The enzyme catalyses S-adenosyl-L-homocysteine + H2O + H(+) = S-inosyl-L-homocysteine + NH4(+). The catalysed reaction is S-methyl-5'-thioadenosine + H2O + H(+) = S-methyl-5'-thioinosine + NH4(+). In terms of biological role, catalyzes the deamination of 5-methylthioadenosine and S-adenosyl-L-homocysteine into 5-methylthioinosine and S-inosyl-L-homocysteine, respectively. Is also able to deaminate adenosine. The chain is 5-methylthioadenosine/S-adenosylhomocysteine deaminase from Bacillus anthracis (strain A0248).